A 92-amino-acid polypeptide reads, in one-letter code: MIIDSQSVVQYTFKIDILEKLYKFLPNLYHSIVNELVEELHLENNDFLIGTYKDLSKAGYFYVIPAPGKNIDDVLKTIMIYVHDYEIEDYFE.

Pays a role in the inhibition of the host restriction-modification system. Strongly inhibits the host mcrA endonuclease that cleaves 5-methyl and 5-hydroxymethylcytosines at the specific DNA sequence C(me)CGG. This is Anti-restriction endonuclease (arn) from Enterobacteria phage T4 (Bacteriophage T4).